The sequence spans 381 residues: Outer membrane protein assembly factor BamB (381 aa).

An N-terminal signal peptide occupies residues 1 to 22 (MNLLKRYAAPVACAAAVLVFAA). Cys23 is lipidated: N-palmitoyl cysteine. Cys23 carries the S-diacylglycerol cysteine lipid modification.

Belongs to the BamB family. As to quaternary structure, part of the Bam complex.

It localises to the cell outer membrane. Functionally, part of the outer membrane protein assembly complex, which is involved in assembly and insertion of beta-barrel proteins into the outer membrane. The chain is Outer membrane protein assembly factor BamB from Burkholderia pseudomallei (strain K96243).